A 321-amino-acid chain; its full sequence is Large ribosomal RNA subunit accumulation protein YCED homolog 1, chloroplastic (321 aa).

The transit peptide at 1-32 (MSLVCSLSCVAPLPQTKQSRPSFLKLETCTLS) directs the protein to the chloroplast.

Belongs to the DUF177 domain family.

It localises to the plastid. The protein resides in the chloroplast stroma. Its subcellular location is the chloroplast nucleoid. In terms of biological role, plays a role in synthesis, processing and/or stability of 23S rRNA. Required for embryogenesis. This Arabidopsis thaliana (Mouse-ear cress) protein is Large ribosomal RNA subunit accumulation protein YCED homolog 1, chloroplastic.